We begin with the raw amino-acid sequence, 217 residues long: MTTIAIVDYGMGNLRSVAQALSTVAPDADVRISAQADEIRAADRVVLPGQGAMPDCMAAFDQSGLREAVLEAARTKPMLGVCVGEQMLLERSAEARAGEAFTAGLGLISGDVIRFDLDGRLQPDGSRYKVPQMGWNRVHQSRTHALWAGVPDQSYFYFVHSYYARPAHPDESVGETEYGVRFTCAIARDNIFATQFHPEKSAQAGLQIYRNFVHWKP.

The 215-residue stretch at 3–217 folds into the Glutamine amidotransferase type-1 domain; the sequence is TIAIVDYGMG…IYRNFVHWKP (215 aa). The Nucleophile role is filled by Cys-82. Catalysis depends on residues His-197 and Glu-199.

As to quaternary structure, heterodimer of HisH and HisF.

It localises to the cytoplasm. The catalysed reaction is 5-[(5-phospho-1-deoxy-D-ribulos-1-ylimino)methylamino]-1-(5-phospho-beta-D-ribosyl)imidazole-4-carboxamide + L-glutamine = D-erythro-1-(imidazol-4-yl)glycerol 3-phosphate + 5-amino-1-(5-phospho-beta-D-ribosyl)imidazole-4-carboxamide + L-glutamate + H(+). It catalyses the reaction L-glutamine + H2O = L-glutamate + NH4(+). It participates in amino-acid biosynthesis; L-histidine biosynthesis; L-histidine from 5-phospho-alpha-D-ribose 1-diphosphate: step 5/9. Functionally, IGPS catalyzes the conversion of PRFAR and glutamine to IGP, AICAR and glutamate. The HisH subunit catalyzes the hydrolysis of glutamine to glutamate and ammonia as part of the synthesis of IGP and AICAR. The resulting ammonia molecule is channeled to the active site of HisF. In Ralstonia nicotianae (strain ATCC BAA-1114 / GMI1000) (Ralstonia solanacearum), this protein is Imidazole glycerol phosphate synthase subunit HisH.